Reading from the N-terminus, the 37-residue chain is Large ribosomal subunit protein bL36c (37 aa).

The protein belongs to the bacterial ribosomal protein bL36 family.

It is found in the plastid. The protein localises to the chloroplast. The polypeptide is Large ribosomal subunit protein bL36c (Stigeoclonium helveticum (Green alga)).